Here is a 345-residue protein sequence, read N- to C-terminus: MTSIFGYPKEELQLDLVAHGFKKYLAEQIFDWIYVKNIYSFDEMTNISKTDRNKLQEYYTIEPLKIVVQQQSKDWTVKFLFQLADGYKIETVLMPQSYGNSVCVTTQVGCNMACTFCASGLLKKTRNLSTAEIVQQVMMVNRYLATTNERVSHIVVMGIGEPFDNFDNTLKFVNIINDPKGYQIGARHITISTCGLVPKIKQFAELKTQVNLAISLHAPNNTIRNQLMPINKAYPVEKLMDAVRYYIELTNRRVTFEYILIENVNDSRETALELAKLIRGLNAYVNLIPYNTVAENGHQRSTKINKFFETLQQQKINCIVRREFGHDIDAACGQLRAKNEGVIRK.

Catalysis depends on E90, which acts as the Proton acceptor. The 232-residue stretch at 96–327 folds into the Radical SAM core domain; sequence QSYGNSVCVT…CIVRREFGHD (232 aa). Cysteines 103 and 332 form a disulfide. Residues C110, C114, and C117 each contribute to the [4Fe-4S] cluster site. Residues 160 to 161, S192, 215 to 217, and N291 each bind S-adenosyl-L-methionine; these read GE and SLH. Residue C332 is the S-methylcysteine intermediate of the active site.

It belongs to the radical SAM superfamily. RlmN family. [4Fe-4S] cluster is required as a cofactor.

The protein resides in the cytoplasm. It catalyses the reaction adenosine(2503) in 23S rRNA + 2 reduced [2Fe-2S]-[ferredoxin] + 2 S-adenosyl-L-methionine = 2-methyladenosine(2503) in 23S rRNA + 5'-deoxyadenosine + L-methionine + 2 oxidized [2Fe-2S]-[ferredoxin] + S-adenosyl-L-homocysteine. It carries out the reaction adenosine(37) in tRNA + 2 reduced [2Fe-2S]-[ferredoxin] + 2 S-adenosyl-L-methionine = 2-methyladenosine(37) in tRNA + 5'-deoxyadenosine + L-methionine + 2 oxidized [2Fe-2S]-[ferredoxin] + S-adenosyl-L-homocysteine. In terms of biological role, specifically methylates position 2 of adenine 2503 in 23S rRNA and position 2 of adenine 37 in tRNAs. The sequence is that of Probable dual-specificity RNA methyltransferase RlmN from Spiroplasma citri.